Reading from the N-terminus, the 185-residue chain is Ribosome-recycling factor (185 aa).

This sequence belongs to the RRF family.

It localises to the cytoplasm. Functionally, responsible for the release of ribosomes from messenger RNA at the termination of protein biosynthesis. May increase the efficiency of translation by recycling ribosomes from one round of translation to another. This is Ribosome-recycling factor from Parafrankia sp. (strain EAN1pec).